The sequence spans 388 residues: N-acetylneuraminate epimerase (388 aa).

The signal sequence occupies residues M1–A26. Kelch repeat units follow at residues M48–G92, K94–A147, G149–D186, S187–G232, F236–A285, A307–G356, and L358–E387.

The protein belongs to the NanM family. Homodimer.

The protein resides in the periplasm. It catalyses the reaction N-acetyl-alpha-neuraminate = N-acetyl-beta-neuraminate. In terms of biological role, converts alpha-N-acetylneuranimic acid (Neu5Ac) to the beta-anomer, accelerating the equilibrium between the alpha- and beta-anomers. Probably facilitates sialidase-negative bacteria to compete successfully for limited amounts of extracellular Neu5Ac, which is likely taken up in the beta-anomer. In addition, the rapid removal of sialic acid from solution might be advantageous to the bacterium to damp down host responses. The chain is N-acetylneuraminate epimerase from Brucella suis (strain ATCC 23445 / NCTC 10510).